The following is a 308-amino-acid chain: MNEEKNYELWLDNYFFKPNFWQKCLAFILLPLSVLYAFFAILNTFFRKKIVFKKPVISVGNLSFGGNGKTPLCKAIAREFDGVFIVLRGYKRKSKGLFVVKNQNEILCTLVQSGDEAMEYAFEENIKGVIVSEDRVKGIEKAFELGAKIVVLDDAFSKFHIKKFDILLESKIKPYFDFTLPSGAYRLPKFYEKRADFIALEGRDFVRYSFVKENPKAVLATAIAKPFRLYEHFIKARACYFFKDHYEFKKEELENLLKKHNCDTLMLTFKDFVKVKDFGFKCQIIELNIELKDSLREKIKTYIKEFEQ.

Residue 63-70 coordinates ATP; it reads SFGGNGKT.

The protein belongs to the LpxK family.

The catalysed reaction is a lipid A disaccharide + ATP = a lipid IVA + ADP + H(+). It functions in the pathway glycolipid biosynthesis; lipid IV(A) biosynthesis; lipid IV(A) from (3R)-3-hydroxytetradecanoyl-[acyl-carrier-protein] and UDP-N-acetyl-alpha-D-glucosamine: step 6/6. Transfers the gamma-phosphate of ATP to the 4'-position of a tetraacyldisaccharide 1-phosphate intermediate (termed DS-1-P) to form tetraacyldisaccharide 1,4'-bis-phosphate (lipid IVA). This Campylobacter jejuni (strain RM1221) protein is Tetraacyldisaccharide 4'-kinase.